The chain runs to 505 residues: RNA-splicing ligase RtcB homolog (505 aa).

Aspartate 119, cysteine 122, histidine 227, histidine 259, and histidine 353 together coordinate Mn(2+). Residue 226-230 coordinates GMP; that stretch reads NHYAE. GMP-binding positions include 353-354, 402-405, serine 409, 428-431, and lysine 504; these read HN, GGTM, and HGAG. The active-site GMP-histidine intermediate is the histidine 428.

This sequence belongs to the RtcB family. In terms of assembly, catalytic component of the tRNA-splicing ligase complex. It depends on Mn(2+) as a cofactor.

The protein localises to the nucleus. It localises to the cytoplasm. It carries out the reaction a 3'-end 3'-phospho-ribonucleotide-RNA + a 5'-end dephospho-ribonucleoside-RNA + GTP = a ribonucleotidyl-ribonucleotide-RNA + GMP + diphosphate. It catalyses the reaction a 3'-end 2',3'-cyclophospho-ribonucleotide-RNA + a 5'-end dephospho-ribonucleoside-RNA + GTP + H2O = a ribonucleotidyl-ribonucleotide-RNA + GMP + diphosphate + H(+). Functionally, catalytic subunit of the tRNA-splicing ligase complex that acts by directly joining spliced tRNA halves to mature-sized tRNAs by incorporating the precursor-derived splice junction phosphate into the mature tRNA as a canonical 3',5'-phosphodiester. May act as an RNA ligase with broad substrate specificity, and may function toward other RNAs. The polypeptide is RNA-splicing ligase RtcB homolog (Xenopus tropicalis (Western clawed frog)).